Reading from the N-terminus, the 623-residue chain is Membrane protein insertase YidC (623 aa).

Helical transmembrane passes span 8-28 (LILA…LFPP), 379-399 (MGLA…PLAY), 449-469 (LPIL…FVTI), 507-527 (TTMA…SMWL), and 543-563 (IFAW…SGLV). Over residues 601 to 617 (KPAAQPAGKAANDGAAP) the composition is skewed to low complexity. The tract at residues 601–623 (KPAAQPAGKAANDGAAPAKKRKP) is disordered.

This sequence belongs to the OXA1/ALB3/YidC family. Type 1 subfamily. In terms of assembly, interacts with the Sec translocase complex via SecD. Specifically interacts with transmembrane segments of nascent integral membrane proteins during membrane integration.

The protein localises to the cell inner membrane. Its function is as follows. Required for the insertion and/or proper folding and/or complex formation of integral membrane proteins into the membrane. Involved in integration of membrane proteins that insert both dependently and independently of the Sec translocase complex, as well as at least some lipoproteins. Aids folding of multispanning membrane proteins. This is Membrane protein insertase YidC from Cereibacter sphaeroides (strain ATCC 17023 / DSM 158 / JCM 6121 / CCUG 31486 / LMG 2827 / NBRC 12203 / NCIMB 8253 / ATH 2.4.1.) (Rhodobacter sphaeroides).